Here is a 248-residue protein sequence, read N- to C-terminus: Triosephosphate isomerase (248 aa).

9 to 11 (NWK) is a substrate binding site. The Electrophile role is filled by H94. Residue E166 is the Proton acceptor of the active site. Substrate-binding positions include G172, S212, and 233–234 (GG).

It belongs to the triosephosphate isomerase family. Homodimer.

Its subcellular location is the cytoplasm. It carries out the reaction D-glyceraldehyde 3-phosphate = dihydroxyacetone phosphate. It functions in the pathway carbohydrate biosynthesis; gluconeogenesis. It participates in carbohydrate degradation; glycolysis; D-glyceraldehyde 3-phosphate from glycerone phosphate: step 1/1. Functionally, involved in the gluconeogenesis. Catalyzes stereospecifically the conversion of dihydroxyacetone phosphate (DHAP) to D-glyceraldehyde-3-phosphate (G3P). The sequence is that of Triosephosphate isomerase from Clostridium botulinum (strain Eklund 17B / Type B).